Consider the following 305-residue polypeptide: Nod factor export ATP-binding protein I (305 aa).

The ABC transporter domain occupies 8–237 (IDLVGVRKSF…HIGCNVIEIY (230 aa)). 40 to 47 (GPNGAGKS) is an ATP binding site.

Belongs to the ABC transporter superfamily. Lipooligosaccharide exporter (TC 3.A.1.102) family. In terms of assembly, the complex is composed of two ATP-binding proteins (NodI) and two transmembrane proteins (NodJ).

Its subcellular location is the cell inner membrane. Functionally, part of the ABC transporter complex NodIJ involved in the export of the nodulation factors (Nod factors), the bacterial signal molecules that induce symbiosis and subsequent nodulation induction. Nod factors are LCO (lipo-chitin oligosaccharide), a modified beta-1,4-linked N-acetylglucosamine oligosaccharide. This subunit is responsible for energy coupling to the transport system. The protein is Nod factor export ATP-binding protein I of Bradyrhizobium sp. (strain SNU001).